A 264-amino-acid chain; its full sequence is Thymidylate synthase (264 aa).

A dUMP-binding site is contributed by R21. Residue H51 participates in (6R)-5,10-methylene-5,6,7,8-tetrahydrofolate binding. 126–127 is a dUMP binding site; sequence RR. C146 (nucleophile) is an active-site residue. Residues 166 to 169, N177, and 207 to 209 each bind dUMP; these read RSAD and HIY. D169 contributes to the (6R)-5,10-methylene-5,6,7,8-tetrahydrofolate binding site. (6R)-5,10-methylene-5,6,7,8-tetrahydrofolate is bound at residue S263.

The protein belongs to the thymidylate synthase family. Bacterial-type ThyA subfamily. Homodimer.

It localises to the cytoplasm. It carries out the reaction dUMP + (6R)-5,10-methylene-5,6,7,8-tetrahydrofolate = 7,8-dihydrofolate + dTMP. It functions in the pathway pyrimidine metabolism; dTTP biosynthesis. Functionally, catalyzes the reductive methylation of 2'-deoxyuridine-5'-monophosphate (dUMP) to 2'-deoxythymidine-5'-monophosphate (dTMP) while utilizing 5,10-methylenetetrahydrofolate (mTHF) as the methyl donor and reductant in the reaction, yielding dihydrofolate (DHF) as a by-product. This enzymatic reaction provides an intracellular de novo source of dTMP, an essential precursor for DNA biosynthesis. The chain is Thymidylate synthase from Bacillus velezensis (strain DSM 23117 / BGSC 10A6 / LMG 26770 / FZB42) (Bacillus amyloliquefaciens subsp. plantarum).